The sequence spans 228 residues: Ribonuclease 3 (228 aa).

An RNase III domain is found at 5-128 (LNRLMARLGY…IIGAMLLDGG (124 aa)). Glutamate 41 serves as a coordination point for Mg(2+). Aspartate 45 is an active-site residue. Aspartate 114 and glutamate 117 together coordinate Mg(2+). Residue glutamate 117 is part of the active site. One can recognise a DRBM domain in the interval 155-225 (DAKTRLQEWL…ASLALEWLEQ (71 aa)).

Belongs to the ribonuclease III family. In terms of assembly, homodimer. It depends on Mg(2+) as a cofactor.

The protein localises to the cytoplasm. The enzyme catalyses Endonucleolytic cleavage to 5'-phosphomonoester.. Functionally, digests double-stranded RNA. Involved in the processing of primary rRNA transcript to yield the immediate precursors to the large and small rRNAs (23S and 16S). Processes some mRNAs, and tRNAs when they are encoded in the rRNA operon. Processes pre-crRNA and tracrRNA of type II CRISPR loci if present in the organism. In Alcanivorax borkumensis (strain ATCC 700651 / DSM 11573 / NCIMB 13689 / SK2), this protein is Ribonuclease 3.